The sequence spans 285 residues: 2-dehydro-3-deoxyphosphooctonate aldolase (285 aa).

Belongs to the KdsA family.

It is found in the cytoplasm. It catalyses the reaction D-arabinose 5-phosphate + phosphoenolpyruvate + H2O = 3-deoxy-alpha-D-manno-2-octulosonate-8-phosphate + phosphate. Its pathway is carbohydrate biosynthesis; 3-deoxy-D-manno-octulosonate biosynthesis; 3-deoxy-D-manno-octulosonate from D-ribulose 5-phosphate: step 2/3. It functions in the pathway bacterial outer membrane biogenesis; lipopolysaccharide biosynthesis. In Delftia acidovorans (strain DSM 14801 / SPH-1), this protein is 2-dehydro-3-deoxyphosphooctonate aldolase.